Here is a 400-residue protein sequence, read N- to C-terminus: Telomeric repeat-binding factor 2-interacting protein 1 (400 aa).

An N-acetylalanine modification is found at A2. Phosphoserine is present on residues S36 and S43. The 24-residue stretch at 78-101 folds into the BRCT domain; it reads FISTQYILDCVERNERLELEAYRL. Residues 105 to 126 form a disordered region; that stretch reads SAADTGSEAKPGALAEGAAEPE. A compositionally biased stretch (low complexity) spans 112–125; that stretch reads EAKPGALAEGAAEP. A Glycyl lysine isopeptide (Lys-Gly) (interchain with G-Cter in SUMO2) cross-link involves residue K114. Positions 128 to 188 constitute a Myb-like domain; it reads QRLAGRIAFT…SLKDRYLKHL (61 aa). Phosphoserine occurs at positions 154 and 156. A Glycyl lysine isopeptide (Lys-Gly) (interchain with G-Cter in SUMO2) cross-link involves residue K194. Disordered stretches follow at residues 196-244 and 264-311; these read LLGD…EEIQ and VVVD…SQPE. A phosphoserine mark is found at S203 and S206. Glycyl lysine isopeptide (Lys-Gly) (interchain with G-Cter in SUMO2) cross-links involve residues K208, K212, and K240. Residues 280-305 are compositionally biased toward acidic residues; the sequence is CDDDPPTPEEDSETQPDEEEEEEEEE. A Glycyl lysine isopeptide (Lys-Gly) (interchain with G-Cter in SUMO2) cross-link involves residue K373. Positions 384-400 match the Nuclear localization signal motif; sequence KKFGAQNVARRIEFRKK.

The protein belongs to the RAP1 family. In terms of assembly, associates with the I-kappa-B-kinase (IKK) core complex, composed of CHUK, IKBKB and IKBKG. Homodimer. Component of the shelterin complex (telosome) composed of TERF1, TERF2, TINF2, TERF2IP ACD and POT1. Interacts with TERF2 (but not TERF1) with its C-terminus. Interacts with SLX4/BTBD12. Interacts with TERF2; the interaction is direct.

It is found in the nucleus. Its subcellular location is the cytoplasm. It localises to the chromosome. The protein localises to the telomere. Acts both as a regulator of telomere function and as a transcription regulator. Involved in the regulation of telomere length and protection as a component of the shelterin complex (telosome). In contrast to other components of the shelterin complex, it is dispensible for telomere capping and does not participate in the protection of telomeres against non-homologous end-joining (NHEJ)-mediated repair. Instead, it is required to negatively regulate telomere recombination and is essential for repressing homology-directed repair (HDR), which can affect telomere length. Does not bind DNA directly: recruited to telomeric double-stranded 5'-TTAGGG-3' repeats via its interaction with TERF2. Independently of its function in telomeres, also acts as a transcription regulator: recruited to extratelomeric 5'-TTAGGG-3' sites via its association with TERF2 or other factors, and regulates gene expression. When cytoplasmic, associates with the I-kappa-B-kinase (IKK) complex and acts as a regulator of the NF-kappa-B signaling by promoting IKK-mediated phosphorylation of RELA/p65, leading to activate expression of NF-kappa-B target genes. This chain is Telomeric repeat-binding factor 2-interacting protein 1 (TERF2IP), found in Macaca fascicularis (Crab-eating macaque).